The chain runs to 448 residues: tRNA-2-methylthio-N(6)-dimethylallyladenosine synthase (448 aa).

Residues 3 to 119 (GRVYVKTHGC…LPEMIDRARD (117 aa)) form the MTTase N-terminal domain. 6 residues coordinate [4Fe-4S] cluster: C12, C49, C82, C156, C160, and C163. One can recognise a Radical SAM core domain in the interval 142–374 (RAEGPTAFVS…QETINANARR (233 aa)). The TRAM domain occupies 377–440 (ESMVGTVQRV…PNSLRGELLG (64 aa)).

The protein belongs to the methylthiotransferase family. MiaB subfamily. Monomer. [4Fe-4S] cluster is required as a cofactor.

The protein resides in the cytoplasm. It catalyses the reaction N(6)-dimethylallyladenosine(37) in tRNA + (sulfur carrier)-SH + AH2 + 2 S-adenosyl-L-methionine = 2-methylsulfanyl-N(6)-dimethylallyladenosine(37) in tRNA + (sulfur carrier)-H + 5'-deoxyadenosine + L-methionine + A + S-adenosyl-L-homocysteine + 2 H(+). Catalyzes the methylthiolation of N6-(dimethylallyl)adenosine (i(6)A), leading to the formation of 2-methylthio-N6-(dimethylallyl)adenosine (ms(2)i(6)A) at position 37 in tRNAs that read codons beginning with uridine. The chain is tRNA-2-methylthio-N(6)-dimethylallyladenosine synthase from Alkalilimnicola ehrlichii (strain ATCC BAA-1101 / DSM 17681 / MLHE-1).